Consider the following 238-residue polypeptide: Zinc-finger homeodomain protein 11 (238 aa).

A ZF-HD dimerization-type; degenerate zinc finger spans residues 12–59 (YRECMRNHAAKLGTYANDGCCEYTPDDGHPAGLLCAACGCHRNFHRKD). Residues 119–188 (RRRTRTKFTE…NHKAGGGGGG (70 aa)) constitute a DNA-binding region (homeobox). Residues 183–200 (GGGGGGGGSGGPGAGGGA) show a composition bias toward gly residues. Residues 183-238 (GGGGGGGGSGGPGAGGGAQTSSSTTRGGGDVGVGLSPAMGGDGEDDEEVRGSEMCM) form a disordered region.

Homo- and heterodimer with other ZFHD proteins.

The protein resides in the nucleus. Its function is as follows. Putative transcription factor. This is Zinc-finger homeodomain protein 11 (ZHD11) from Oryza sativa subsp. indica (Rice).